The sequence spans 240 residues: Biotin--[acetyl-CoA-carboxylase] ligase (240 aa).

Residues Met-1–Asp-176 enclose the BPL/LPL catalytic domain. Biotin-binding positions include Ser-7–Asn-9, Gln-30, Arg-34–Arg-36, and Lys-102.

It belongs to the biotin--protein ligase family.

It carries out the reaction biotin + L-lysyl-[protein] + ATP = N(6)-biotinyl-L-lysyl-[protein] + AMP + diphosphate + H(+). Functionally, activates biotin to form biotinyl-5'-adenylate and transfers the biotin moiety to biotin-accepting proteins. The protein is Biotin--[acetyl-CoA-carboxylase] ligase (birA) of Paracoccus denitrificans.